Consider the following 325-residue polypeptide: uncharacterized protein (325 aa).

Positions 296-325 (QRTLSSSMEEADRPRRMSVTQPHLPPVPSA) are disordered.

The protein belongs to the NDRG family.

This is an uncharacterized protein from Caenorhabditis elegans.